The sequence spans 328 residues: Stress response kinase A (328 aa).

Aspartate 201 functions as the Proton acceptor in the catalytic mechanism. Asparagine 206 and aspartate 217 together coordinate Mg(2+). Residue aspartate 217 is part of the active site.

This sequence belongs to the SrkA/RdoA protein kinase family. As to quaternary structure, monomer. Requires Mg(2+) as cofactor.

It localises to the cytoplasm. It catalyses the reaction L-seryl-[protein] + ATP = O-phospho-L-seryl-[protein] + ADP + H(+). It carries out the reaction L-threonyl-[protein] + ATP = O-phospho-L-threonyl-[protein] + ADP + H(+). Functionally, a protein kinase that phosphorylates Ser and Thr residues. Probably acts to suppress the effects of stress linked to accumulation of reactive oxygen species. Probably involved in the extracytoplasmic stress response. Also has a role in LPS synthesis, through regulation of the galETK expression. A protein kinase that phosphorylates Ser and Thr residues. Probably acts to suppress the effects of stress linked to accumulation of reactive oxygen species. Probably involved in the extracytoplasmic stress response. The polypeptide is Stress response kinase A (Shigella flexneri).